The sequence spans 283 residues: Phosphatidylglycerol--prolipoprotein diacylglyceryl transferase (283 aa).

4 helical membrane passes run 17–37, 56–76, 92–112, and 117–137; these read LAVR…TFLG, FLTW…VLFY, WEGG…IWLF, and GIGF…GLAS. R139 is an a 1,2-diacyl-sn-glycero-3-phospho-(1'-sn-glycerol) binding site. The next 3 membrane-spanning stretches (helical) occupy residues 194-214, 222-242, and 255-275; these read PSQL…VWLF, GQVA…AEFA, and GLSM…VGFV.

This sequence belongs to the Lgt family.

The protein resides in the cell inner membrane. The catalysed reaction is L-cysteinyl-[prolipoprotein] + a 1,2-diacyl-sn-glycero-3-phospho-(1'-sn-glycerol) = an S-1,2-diacyl-sn-glyceryl-L-cysteinyl-[prolipoprotein] + sn-glycerol 1-phosphate + H(+). It functions in the pathway protein modification; lipoprotein biosynthesis (diacylglyceryl transfer). In terms of biological role, catalyzes the transfer of the diacylglyceryl group from phosphatidylglycerol to the sulfhydryl group of the N-terminal cysteine of a prolipoprotein, the first step in the formation of mature lipoproteins. This is Phosphatidylglycerol--prolipoprotein diacylglyceryl transferase from Neisseria meningitidis serogroup C (strain 053442).